Reading from the N-terminus, the 555-residue chain is Glutamine--tRNA ligase (555 aa).

Positions 35 to 45 (PEPNGYLHIGH) match the 'HIGH' region motif. ATP is bound by residues 36–38 (EPN) and 42–48 (HIGHAKS). L-glutamine contacts are provided by Asp-68 and Tyr-213. Residues Thr-232, 262-263 (RL), and 270-272 (MSK) each bind ATP. The 'KMSKS' region signature appears at 269 to 273 (VMSKR).

Belongs to the class-I aminoacyl-tRNA synthetase family. In terms of assembly, monomer.

Its subcellular location is the cytoplasm. It catalyses the reaction tRNA(Gln) + L-glutamine + ATP = L-glutaminyl-tRNA(Gln) + AMP + diphosphate. This is Glutamine--tRNA ligase from Photobacterium profundum (strain SS9).